The following is a 424-amino-acid chain: UPF0053 protein MG146 homolog (424 aa).

The CNNM transmembrane domain occupies 6 to 191 (SGGLLALIII…EQNGLFTKED (186 aa)). 4 consecutive transmembrane segments (helical) span residues 7–27 (GGLLALIIISIILLACISAVV), 71–91 (LITILVANNIVAILVSNILFL), 101–121 (AISSALNLLISGVLLLMLCEI), and 135–155 (LVYFAVVVYFFYILFWPITKL). CBS domains follow at residues 210 to 270 (MIKW…NEPF) and 275 to 335 (LLYP…EHDE).

Belongs to the UPF0053 family.

The protein resides in the cell membrane. The chain is UPF0053 protein MG146 homolog from Mycoplasma pneumoniae (strain ATCC 29342 / M129 / Subtype 1) (Mycoplasmoides pneumoniae).